Consider the following 540-residue polypeptide: Acyl-CoA synthetase 7 (540 aa).

Residues 186 to 194, Asp-415, Arg-430, and Lys-522 each bind ATP; that span reads SSGTTGKPK. The Microbody targeting signal motif lies at 538-540; it reads AKL.

It belongs to the ATP-dependent AMP-binding enzyme family. Expressed in intestine.

It localises to the peroxisome. It catalyses the reaction nonanoate + ATP + CoA = nonanoyl-CoA + AMP + diphosphate. It carries out the reaction IC-asc-C7 + ATP + CoA = IC-asc-C7-CoA + AMP + diphosphate. The catalysed reaction is IC-asc-C9 + ATP + CoA = IC-asc-C9-CoA + AMP + diphosphate. Its function is as follows. Plays a role in ascaroside pheromones biosynthesis, which regulates development and behavior. Specifically, activates the side chain of medium-chain indol-3-carbonyl (IC)-ascarosides for shortening through beta-oxidation. Converts IC-asc-C7 and IC-asc-C9 into IC-asc-C7-CoA and IC-asc-C9-CoA, respectively. May play a role in fatty-acid metabolism by activating and converting nonanoate (C9) into nonanoyl-CoA (C9-CoA). The chain is Acyl-CoA synthetase 7 from Caenorhabditis elegans.